The following is a 260-amino-acid chain: Small ribosomal subunit protein bS6 (260 aa).

This sequence belongs to the bacterial ribosomal protein bS6 family.

Binds together with bS18 to 16S ribosomal RNA. The chain is Small ribosomal subunit protein bS6 from Wolbachia sp. subsp. Brugia malayi (strain TRS).